Here is a 212-residue protein sequence, read N- to C-terminus: ATP-dependent dethiobiotin synthetase BioD (212 aa).

ATP is bound at residue 13–18; sequence GIGKTV. Mg(2+) is bound at residue Thr-17. Lys-33 is a catalytic residue. Glu-100 contributes to the Mg(2+) binding site. ATP-binding positions include 100–103 and 184–186; these read EGAG and PHV.

The protein belongs to the dethiobiotin synthetase family. Homodimer. Mg(2+) serves as cofactor.

The protein resides in the cytoplasm. It carries out the reaction (7R,8S)-7,8-diammoniononanoate + CO2 + ATP = (4R,5S)-dethiobiotin + ADP + phosphate + 3 H(+). It functions in the pathway cofactor biosynthesis; biotin biosynthesis; biotin from 7,8-diaminononanoate: step 1/2. In terms of biological role, catalyzes a mechanistically unusual reaction, the ATP-dependent insertion of CO2 between the N7 and N8 nitrogen atoms of 7,8-diaminopelargonic acid (DAPA, also called 7,8-diammoniononanoate) to form a ureido ring. The sequence is that of ATP-dependent dethiobiotin synthetase BioD from Nitrobacter hamburgensis (strain DSM 10229 / NCIMB 13809 / X14).